The sequence spans 860 residues: MQEQYRPEEIESKVQLHWDEKRTFEVTEDESKEKYYCLSMLPYPSGRLHMGHVRNYTIGDVIARYQRMLGKNVLQPIGWDAFGLPAEGAAVKNNTAPAPWTYDNIAYMKNQLKMLGFGYDWSRELATCTPEYYRWEQKFFTELYKKGLVYKKTSAVNWCPNDQTVLANEQVIDGCCWRCDTKVERKEIPQWFIKITAYADELLNDLDKLDHWPDTVKTMQRNWIGRSEGVEITFNVNNYDNTLTVYTTRPDTFMGCTYLAVAAGHPLAQKAAENNPELAAFIDECRNTKVAEAEMATMEKKGVDTGFKAVHPLTGEEIPVWAANFVLMEYGTGAVMAVPGHDQRDYEFASKYGLNIKPVILAADGSEPDLSQQALTEKGVLFNSGEFNGLDHEAAFNAIADKLTAMGVGERKVNYRLRDWGVSRQRYWGAPIPMVTLEDGTVMPTPDDQLPVILPEDVVMDGITSPIKADPEWAKTTVNGMPALRETDTFDTFMESSWYYARYTCPQYKEGMLDSKAANYWLPVDIYIGGIEHAIMHLLYFRFFHKLMRDAGMVNSDEPAKQLLCQGMVLADAFYYVGENGERNWVSPVDAIVERDEKGRIVKAKDAAGHELVYTGMSKMSKSKNNGIDPQVMVERYGADTVRLFMMFASPADMTLEWQESGVEGANRFLKRVWKLVYEHTAKGDVATLNVDALTEDQKALRRDVHKTIAKVTDDIGRRQTFNTAIAAIMELMNKLAKAPTDGEQDRALMQEALLAVVRMLNPFTPHICFTLWQELKGEGDIDNAPWPVADEKAMVEDSTLVVVQVNGKVRAKITVPVDATEEQVRERAGQEHLVAKYLDGVTVRKVIYVPGKLLNLVVG.

A 'HIGH' region motif is present at residues 42–52 (PYPSGRLHMGH). The 'KMSKS' region motif lies at 619 to 623 (KMSKS). Lys622 contacts ATP.

The protein belongs to the class-I aminoacyl-tRNA synthetase family.

The protein resides in the cytoplasm. The enzyme catalyses tRNA(Leu) + L-leucine + ATP = L-leucyl-tRNA(Leu) + AMP + diphosphate. This Escherichia coli O9:H4 (strain HS) protein is Leucine--tRNA ligase.